A 149-amino-acid polypeptide reads, in one-letter code: MSFLLPKLTSKKEVDQAIKSTAEKVLVLRFGRDEDPVCLQLDDILSKTSSDLSKMAAIYLVDVDQTAVYTQYFDISYIPSTVFFFNGQHMKVDYGSPDHTKFVGSFKTKQDFIDLIEVIYRGAMRGKLIVQSPIDPKNIPKYDLLYQDI.

It belongs to the DIM1 family. Homodimer. Interacts with the U5-102 kDa protein subunit of the spliceosome.

It is found in the nucleus. Essential role in pre-mRNA splicing. Required in cell cycle progression for S/G(2) transition. This chain is Thioredoxin-like protein 4B (TXNL4B), found in Homo sapiens (Human).